The primary structure comprises 637 residues: 1-deoxy-D-xylulose-5-phosphate synthase (637 aa).

Thiamine diphosphate-binding positions include histidine 76 and 117–119 (GHS). Aspartate 148 serves as a coordination point for Mg(2+). Thiamine diphosphate contacts are provided by residues 149–150 (GA), asparagine 177, tyrosine 294, and glutamate 381. Asparagine 177 is a binding site for Mg(2+).

It belongs to the transketolase family. DXPS subfamily. In terms of assembly, homodimer. It depends on Mg(2+) as a cofactor. Requires thiamine diphosphate as cofactor.

It carries out the reaction D-glyceraldehyde 3-phosphate + pyruvate + H(+) = 1-deoxy-D-xylulose 5-phosphate + CO2. It functions in the pathway metabolic intermediate biosynthesis; 1-deoxy-D-xylulose 5-phosphate biosynthesis; 1-deoxy-D-xylulose 5-phosphate from D-glyceraldehyde 3-phosphate and pyruvate: step 1/1. Catalyzes the acyloin condensation reaction between C atoms 2 and 3 of pyruvate and glyceraldehyde 3-phosphate to yield 1-deoxy-D-xylulose-5-phosphate (DXP). This chain is 1-deoxy-D-xylulose-5-phosphate synthase, found in Neisseria meningitidis serogroup A / serotype 4A (strain DSM 15465 / Z2491).